Consider the following 65-residue polypeptide: MNKAWLFWSVIVLYFFIKFFDKVLDIKLFGSIQIWLDNLPIPMKILLTIALVLFLFIVFPYRGKR.

2 consecutive transmembrane segments (helical) span residues Ala4–Leu24 and Leu39–Phe59.

Its subcellular location is the membrane. This is an uncharacterized protein from Streptococcus pneumoniae serotype 2 (strain D39 / NCTC 7466).